We begin with the raw amino-acid sequence, 182 residues long: Large ribosomal subunit protein bL17m (182 aa).

The protein belongs to the bacterial ribosomal protein bL17 family.

The protein resides in the mitochondrion. This Dictyostelium discoideum (Social amoeba) protein is Large ribosomal subunit protein bL17m (mrpl17).